We begin with the raw amino-acid sequence, 404 residues long: MSHKIMAINAGSSSLKFQLLAMPEGEILCQGIIERIGLADARLVVKTATEKWQEITPVADHREAVTLLLEQLINRKIINSLHDIDATGHRVAHGGETFKDSALVTDDVMAEIERLAELAPLHNPVNLLGINIFRQLLPSAPTIAVFDTAFHQTLEMPAYIYPLPWRYYHELGIRRYGFHGTSHKYVSGKLAEKLGVPLSALRVVCCHLGNGSSVCAIKGGKSVNTSMGFTPQSGVMMGTRSGDIDPSILPWIALREGKTPQELNQLLNNESGLLGVSGVSPDFRDIEQAAENGNQQAQLALALFAERIRATIGSYVLQMGGLDALIFTGGIGENSARARAAICNNLHFLGLSIDADKNQHNATFIQSEQAMVKVAVINTNEELMIARDVMRIALPEPALQEVLA.

The protein belongs to the acetokinase family. PduW subfamily.

It is found in the cytoplasm. The enzyme catalyses propanoate + ATP = propanoyl phosphate + ADP. It participates in polyol metabolism; 1,2-propanediol degradation. Its function is as follows. Works with phosphate acetyltransferase (pta) to capture exogenous propionate and regenerate propionyl-CoA during degradation of 1,2-propanediol (1,2-PD). This Escherichia fergusonii (strain ATCC 35469 / DSM 13698 / CCUG 18766 / IAM 14443 / JCM 21226 / LMG 7866 / NBRC 102419 / NCTC 12128 / CDC 0568-73) protein is Propionate kinase.